The primary structure comprises 346 residues: UPF0283 membrane protein VIBHAR_01918 (346 aa).

Basic and acidic residues predominate over residues 1–17; the sequence is MSELKQKQVFKEKVMHS. Positions 1–28 are disordered; that stretch reads MSELKQKQVFKEKVMHSEEEDVSPELNT. 2 consecutive transmembrane segments (helical) span residues 73 to 93 and 98 to 118; these read LFATFAGLVVWQAVDSVITAI and WLALGWVGFITTIASFGLGAL.

The protein belongs to the UPF0283 family.

It localises to the cell inner membrane. The polypeptide is UPF0283 membrane protein VIBHAR_01918 (Vibrio campbellii (strain ATCC BAA-1116)).